A 243-amino-acid chain; its full sequence is UPF0758 protein AM1_4368 (243 aa).

One can recognise an MPN domain in the interval 113–235 (VIDDPAVAAA…FTSLRQTTSL (123 aa)). Zn(2+)-binding residues include H184, H186, and D197. The short motif at 184–197 (HNHPSGQTDPSPED) is the JAMM motif element.

Belongs to the UPF0758 family.

This is UPF0758 protein AM1_4368 from Acaryochloris marina (strain MBIC 11017).